The chain runs to 361 residues: uncharacterized protein (361 aa).

This is an uncharacterized protein from Acanthamoeba polyphaga (Amoeba).